The sequence spans 173 residues: NADH-ubiquinone oxidoreductase chain 6 (173 aa).

Helical transmembrane passes span 1-21 (MVYF…GVAS), 28-48 (AALG…SYGG), 53-73 (LILF…TAAL), 87-107 (VLMY…YFLV), and 139-159 (LGGW…FVVL).

Belongs to the complex I subunit 6 family.

The protein localises to the mitochondrion membrane. It carries out the reaction a ubiquinone + NADH + 5 H(+)(in) = a ubiquinol + NAD(+) + 4 H(+)(out). In terms of biological role, core subunit of the mitochondrial membrane respiratory chain NADH dehydrogenase (Complex I) that is believed to belong to the minimal assembly required for catalysis. Complex I functions in the transfer of electrons from NADH to the respiratory chain. The immediate electron acceptor for the enzyme is believed to be ubiquinone. The chain is NADH-ubiquinone oxidoreductase chain 6 (MT-ND6) from Scyliorhinus canicula (Small-spotted catshark).